The following is a 983-amino-acid chain: UPF0182 protein KRH_08700 (983 aa).

The next 7 helical transmembrane spans lie at 22–42 (GALLPTVIAVVVLIALFVGFT), 67–87 (VIGLFVAAALIVAALMFLSLW), 116–136 (VVMVAVPLIFGLFAASTVATQ), 172–192 (LLIGFLVTALLLAGVAGLLMH), 213–233 (VHLGSIVAAFLALQAVNFWLD), 261–281 (GILAVAALLVAVLFVVAGFIG), and 288–308 (IGAAMLVVVAVVAGGLYPWAI). Positions 893 to 959 (GAKTDTGAGV…DKAMKDGDWT (67 aa)) are disordered. Over residues 947–959 (QDSDKAMKDGDWT) the composition is skewed to basic and acidic residues.

The protein belongs to the UPF0182 family.

The protein localises to the cell membrane. This Kocuria rhizophila (strain ATCC 9341 / DSM 348 / NBRC 103217 / DC2201) protein is UPF0182 protein KRH_08700.